Consider the following 293-residue polypeptide: Probable flavonol synthase 6 (293 aa).

A Fe2OG dioxygenase domain is found at K156–P253. 2-oxoglutarate is bound at residue N164 to Y166. Residues H178, D180, and H234 each contribute to the Fe cation site. R244 to S246 contributes to the 2-oxoglutarate binding site.

This sequence belongs to the iron/ascorbate-dependent oxidoreductase family. Fe(2+) is required as a cofactor.

The catalysed reaction is a (2R,3R)-dihydroflavonol + 2-oxoglutarate + O2 = a flavonol + succinate + CO2 + H2O. It participates in secondary metabolite biosynthesis; flavonoid biosynthesis. This chain is Probable flavonol synthase 6 (FLS6), found in Arabidopsis thaliana (Mouse-ear cress).